The chain runs to 253 residues: MATGRTHRPATRSRGIPEATVARLPLYLRALTALSERSVPTVSSEELATAAGVNSAKLRKDFSYLGSYGTRGVGYDVEYLVYQISRELGLTQDWPVAIVGIGNLGAALANYGGFASRGFRVAALIDADPAMAGTPVAGIAVQHTDDLDRIISDNGVSIGVITTPPGAAQQVCDRLVAAGVTSILNFAPTVLSVPEGVDVRKVDLSIELQILAFHEQRKAGEDSAAEDEGAPPMRATPASRKGPDGDMPAVMPA.

Positions 26–65 (LYLRALTALSERSVPTVSSEELATAAGVNSAKLRKDFSYL) form a DNA-binding region, H-T-H motif. Residue 100 to 105 (GIGNLG) coordinates NAD(+). A disordered region spans residues 217–253 (RKAGEDSAAEDEGAPPMRATPASRKGPDGDMPAVMPA).

Belongs to the transcriptional regulatory Rex family. Homodimer.

It is found in the cytoplasm. Functionally, modulates transcription in response to changes in cellular NADH/NAD(+) redox state. This Streptomyces griseus subsp. griseus (strain JCM 4626 / CBS 651.72 / NBRC 13350 / KCC S-0626 / ISP 5235) protein is Redox-sensing transcriptional repressor Rex.